Here is a 361-residue protein sequence, read N- to C-terminus: Chorismate synthase (361 aa).

An NADP(+)-binding site is contributed by R48. FMN-binding positions include 125-127, 238-239, G278, 293-297, and R319; these read RSS, NA, and KPTSS.

It belongs to the chorismate synthase family. Homotetramer. The cofactor is FMNH2.

It catalyses the reaction 5-O-(1-carboxyvinyl)-3-phosphoshikimate = chorismate + phosphate. The protein operates within metabolic intermediate biosynthesis; chorismate biosynthesis; chorismate from D-erythrose 4-phosphate and phosphoenolpyruvate: step 7/7. Catalyzes the anti-1,4-elimination of the C-3 phosphate and the C-6 proR hydrogen from 5-enolpyruvylshikimate-3-phosphate (EPSP) to yield chorismate, which is the branch point compound that serves as the starting substrate for the three terminal pathways of aromatic amino acid biosynthesis. This reaction introduces a second double bond into the aromatic ring system. This Aliivibrio fischeri (strain MJ11) (Vibrio fischeri) protein is Chorismate synthase.